Reading from the N-terminus, the 291-residue chain is Ribosomal RNA small subunit methyltransferase A (291 aa).

The S-adenosyl-L-methionine site is built by Asn-27, Leu-29, Gly-54, Glu-75, Asp-100, and Asn-125.

This sequence belongs to the class I-like SAM-binding methyltransferase superfamily. rRNA adenine N(6)-methyltransferase family. RsmA subfamily.

It localises to the cytoplasm. The catalysed reaction is adenosine(1518)/adenosine(1519) in 16S rRNA + 4 S-adenosyl-L-methionine = N(6)-dimethyladenosine(1518)/N(6)-dimethyladenosine(1519) in 16S rRNA + 4 S-adenosyl-L-homocysteine + 4 H(+). Its function is as follows. Specifically dimethylates two adjacent adenosines (A1518 and A1519) in the loop of a conserved hairpin near the 3'-end of 16S rRNA in the 30S particle. May play a critical role in biogenesis of 30S subunits. This Streptococcus mutans serotype c (strain ATCC 700610 / UA159) protein is Ribosomal RNA small subunit methyltransferase A.